Here is a 503-residue protein sequence, read N- to C-terminus: Phenylalanine--tRNA ligase alpha subunit (503 aa).

N-acetylserine is present on serine 2. The segment at 2 to 173 (SDFQLEILKK…KRKLIAQGKI (172 aa)) is contains the major tRNA-Phe binding sites. Residues threonine 333, 374–376 (QVE), and tyrosine 414 each bind L-phenylalanine. A Mg(2+)-binding site is contributed by glutamate 416. Phenylalanine 440 is a binding site for L-phenylalanine.

This sequence belongs to the class-II aminoacyl-tRNA synthetase family. Phe-tRNA synthetase alpha subunit type 2 subfamily. As to quaternary structure, tetramer of two alpha and two beta subunits. Requires Mg(2+) as cofactor.

It is found in the cytoplasm. The enzyme catalyses tRNA(Phe) + L-phenylalanine + ATP = L-phenylalanyl-tRNA(Phe) + AMP + diphosphate + H(+). This Saccharomyces cerevisiae (strain ATCC 204508 / S288c) (Baker's yeast) protein is Phenylalanine--tRNA ligase alpha subunit (FRS2).